Reading from the N-terminus, the 117-residue chain is Hemerythrin subunit alpha (117 aa).

H24, H53, E57, H72, H76, H105, and D110 together coordinate Fe cation.

This sequence belongs to the hemerythrin family. As to quaternary structure, octamer composed of two types of chains: alpha and beta.

Hemerythrin is a respiratory protein in blood cells of certain marine worms. The oxygen-binding site in each chain contains two iron atoms. The sequence is that of Hemerythrin subunit alpha from Lingula anatina (Brachiopod).